The following is a 393-amino-acid chain: NAD(P)H-quinone oxidoreductase subunit H, chloroplastic (393 aa).

The protein belongs to the complex I 49 kDa subunit family. NDH is composed of at least 16 different subunits, 5 of which are encoded in the nucleus.

The protein resides in the plastid. It is found in the chloroplast thylakoid membrane. The enzyme catalyses a plastoquinone + NADH + (n+1) H(+)(in) = a plastoquinol + NAD(+) + n H(+)(out). It catalyses the reaction a plastoquinone + NADPH + (n+1) H(+)(in) = a plastoquinol + NADP(+) + n H(+)(out). In terms of biological role, NDH shuttles electrons from NAD(P)H:plastoquinone, via FMN and iron-sulfur (Fe-S) centers, to quinones in the photosynthetic chain and possibly in a chloroplast respiratory chain. The immediate electron acceptor for the enzyme in this species is believed to be plastoquinone. Couples the redox reaction to proton translocation, and thus conserves the redox energy in a proton gradient. The chain is NAD(P)H-quinone oxidoreductase subunit H, chloroplastic from Barbarea verna (Land cress).